The following is a 236-amino-acid chain: V-set and transmembrane domain-containing protein 2A (236 aa).

Positions 1 to 24 (MMGIFLVYVGFVFFSVLYVQQGLS) are cleaved as a signal peptide. Residues 27-143 (AKFTEFPRNV…YGELQEHKAQ (117 aa)) form the Ig-like V-type domain. N-linked (GlcNAc...) asparagine glycosylation occurs at Asn35. Cys48 and Cys127 are joined by a disulfide. Residue Asn175 is glycosylated (N-linked (GlcNAc...) asparagine). A compositionally biased stretch (polar residues) spans 184–199 (IHGSANQRTHSTSSPQ). The tract at residues 184–206 (IHGSANQRTHSTSSPQVVAKIPK) is disordered.

Homodimer. Post-translationally, N-glycosylated. N-linked glycosylation is critical for secretion but not for preadipocyte cell differentiation activity.

Its subcellular location is the secreted. Plays a role in the regulation of the early stage of white and brown preadipocyte cell differentiation. Promotes adipogenic commitment of preadipocytes by increasing gene expression of the transcription factor PPARG in a BMP4-dependent signaling pathway. The sequence is that of V-set and transmembrane domain-containing protein 2A from Homo sapiens (Human).